A 211-amino-acid chain; its full sequence is Large ribosomal subunit protein eL13 (211 aa).

Belongs to the eukaryotic ribosomal protein eL13 family. As to quaternary structure, component of the 60S large ribosomal subunit (LSU).

Its subcellular location is the cytoplasm. Functionally, component of the ribosome, a large ribonucleoprotein complex responsible for the synthesis of proteins in the cell. The small ribosomal subunit (SSU) binds messenger RNAs (mRNAs) and translates the encoded message by selecting cognate aminoacyl-transfer RNA (tRNA) molecules. The large subunit (LSU) contains the ribosomal catalytic site termed the peptidyl transferase center (PTC), which catalyzes the formation of peptide bonds, thereby polymerizing the amino acids delivered by tRNAs into a polypeptide chain. The nascent polypeptides leave the ribosome through a tunnel in the LSU and interact with protein factors that function in enzymatic processing, targeting, and the membrane insertion of nascent chains at the exit of the ribosomal tunnel. As part of the LSU, it is probably required for its formation and the maturation of rRNAs. The chain is Large ribosomal subunit protein eL13 (rpl13) from Ictalurus punctatus (Channel catfish).